Here is a 303-residue protein sequence, read N- to C-terminus: uncharacterized protein (303 aa).

Disordered regions lie at residues 1–89 and 132–159; these read MTSP…NVRS and SELPDLSGPVQRTVPCKPSPDRGSSTPR. Polar residues predominate over residues 61–89; that stretch reads RASQSGYRPSDPLTTTRQSNPAPGANVRS. Helical transmembrane passes span 205-225 and 264-284; these read LLLSVALFFVWMIAVAFLYLL and VLVGLVNIVLMTTMAAIAAFV.

The protein to M.tuberculosis Rv0007.

It localises to the cell membrane. This is an uncharacterized protein from Mycobacterium leprae (strain TN).